The primary structure comprises 446 residues: Packaging protein 1 (446 aa).

Residues 1-10 (METRGRRRAF) are compositionally biased toward basic residues. Residues 1–74 (METRGRRRAF…PSQPPQPRSL (74 aa)) form a disordered region. Residue 170 to 177 (GPTGCGKS) participates in ATP binding. Positions 439–446 (RAYRKRNK) are DNA-binding.

It belongs to the adenoviridae packaging protein 1 family. Homodimer. Part of a genome packaging complex composed of packaging proteins 1, 2 and 3; this complex specifically binds to the packaging sequence on the left end of viral genomic DNA and performs packaging of the viral genome. Interacts with protein 33K.

The protein localises to the virion. It localises to the host nucleus. The protein resides in the host nucleoplasm. It is found in the host nucleolus. Its function is as follows. Component of the packaging machinery which encapsidates the viral DNA into preformed capsids and transcriptional activator of the viral major late promoter (MLP). Binds, along with packaging proteins 2 and 3, to the specific packaging sequence on the left end of viral genomic DNA and displays ATPase activity thereby providing the power stroke of the packaging machinery. The activity of packaging protein IVa2 is stimulated by protein 33K which acts as a terminase. May be the protein that pumps DNA into the capsid powered by ATP hydrolysis. Specifically binds to the 5'-CG-3' nucleotides of the repeats making up the packaging sequence. Component of the DEF-A and DEF-B transcription factors that bind downstream elements of the major late promoter (MLP), and stimulate transcription from the MLP after initiation of viral DNA replication. DEF-A is a heterodimer packaging proteins 1 and 2 and DEF-B is a homodimer of packaging protein 1. This chain is Packaging protein 1, found in Human adenovirus F serotype 40 (HAdV-40).